The primary structure comprises 117 residues: uncharacterized protein (117 aa).

A run of 2 helical transmembrane segments spans residues 9–29 and 56–76; these read ITSH…FIPF and VIIV…FFIP.

It localises to the membrane. This is an uncharacterized protein from Saccharomyces cerevisiae (strain ATCC 204508 / S288c) (Baker's yeast).